The following is a 308-amino-acid chain: Methionine synthase (308 aa).

Zn(2+) is bound by residues histidine 201, cysteine 203, glutamate 224, and cysteine 285.

The protein belongs to the archaeal MetE family. Zn(2+) serves as cofactor.

It functions in the pathway amino-acid biosynthesis; L-methionine biosynthesis via de novo pathway. Its function is as follows. Catalyzes the transfer of a methyl group to L-homocysteine resulting in methionine formation. Can use methylcobalamin and methylcobinamide as methyl donors, but methylcobalamin is not considered to be the physiological substrate. The polypeptide is Methionine synthase (Methanothermobacter thermautotrophicus (strain ATCC 29096 / DSM 1053 / JCM 10044 / NBRC 100330 / Delta H) (Methanobacterium thermoautotrophicum)).